The chain runs to 507 residues: Alkyl hydroperoxide reductase subunit F (507 aa).

Residue 207-222 (DVLIVGGGPASGSAAI) participates in FAD binding. The cysteines at positions 335 and 338 are disulfide-linked. An NAD(+)-binding site is contributed by 347–361 (DVAVIGGGNSGVEAA). An FAD-binding site is contributed by 467–477 (TNVPGIFAAGD).

This sequence belongs to the class-II pyridine nucleotide-disulfide oxidoreductase family. As to quaternary structure, homodimer. Requires FAD as cofactor.

In terms of biological role, serves to protect the cell against DNA damage by alkyl hydroperoxides. It can use either NADH or NADPH as electron donor for direct reduction of redox dyes or of alkyl hydroperoxides when combined with the AhpC protein. This Staphylococcus aureus (strain MRSA252) protein is Alkyl hydroperoxide reductase subunit F (ahpF).